Consider the following 395-residue polypeptide: S-adenosylmethionine synthase 2 (395 aa).

Glu9 provides a ligand contact to Mg(2+). Residue His15 coordinates ATP. K(+) is bound at residue Glu43. Residues Glu56 and Gln99 each coordinate L-methionine. ATP-binding positions include Asp167–Lys169, Ser235–Phe238, Asp246, Arg252–Lys253, Ala269, Lys273, and Lys277. Position 246 (Asp246) interacts with L-methionine. L-methionine is bound at residue Lys277.

The protein belongs to the AdoMet synthase family. Homotetramer. The cofactor is Mn(2+). It depends on Mg(2+) as a cofactor. Co(2+) serves as cofactor. K(+) is required as a cofactor.

The protein localises to the cytoplasm. The catalysed reaction is L-methionine + ATP + H2O = S-adenosyl-L-methionine + phosphate + diphosphate. The protein operates within amino-acid biosynthesis; S-adenosyl-L-methionine biosynthesis; S-adenosyl-L-methionine from L-methionine: step 1/1. Its function is as follows. Catalyzes the formation of S-adenosylmethionine from methionine and ATP. The reaction comprises two steps that are both catalyzed by the same enzyme: formation of S-adenosylmethionine (AdoMet) and triphosphate, and subsequent hydrolysis of the triphosphate. The chain is S-adenosylmethionine synthase 2 (METK2) from Suaeda salsa (Seepweed).